The primary structure comprises 286 residues: Shikimate dehydrogenase (NADP(+)) (286 aa).

Shikimate contacts are provided by residues 20–22 and Thr67; that span reads SLS. Lys71 acts as the Proton acceptor in catalysis. 2 residues coordinate shikimate: Asn92 and Asp107. NADP(+) is bound by residues 132 to 136 and Met228; that span reads GAGGA. Tyr230 is a binding site for shikimate. Position 251 (Gly251) interacts with NADP(+).

This sequence belongs to the shikimate dehydrogenase family. As to quaternary structure, homodimer.

The enzyme catalyses shikimate + NADP(+) = 3-dehydroshikimate + NADPH + H(+). The protein operates within metabolic intermediate biosynthesis; chorismate biosynthesis; chorismate from D-erythrose 4-phosphate and phosphoenolpyruvate: step 4/7. Involved in the biosynthesis of the chorismate, which leads to the biosynthesis of aromatic amino acids. Catalyzes the reversible NADPH linked reduction of 3-dehydroshikimate (DHSA) to yield shikimate (SA). The sequence is that of Shikimate dehydrogenase (NADP(+)) from Geobacter metallireducens (strain ATCC 53774 / DSM 7210 / GS-15).